The sequence spans 1287 residues: DNA-directed RNA polymerase subunit beta (1287 aa).

The protein belongs to the RNA polymerase beta chain family. The RNAP catalytic core consists of 2 alpha, 1 beta, 1 beta' and 1 omega subunit. When a sigma factor is associated with the core the holoenzyme is formed, which can initiate transcription.

The enzyme catalyses RNA(n) + a ribonucleoside 5'-triphosphate = RNA(n+1) + diphosphate. DNA-dependent RNA polymerase catalyzes the transcription of DNA into RNA using the four ribonucleoside triphosphates as substrates. In Mycoplasma capricolum subsp. capricolum (strain California kid / ATCC 27343 / NCTC 10154), this protein is DNA-directed RNA polymerase subunit beta.